Here is a 515-residue protein sequence, read N- to C-terminus: Maturase K (515 aa).

This sequence belongs to the intron maturase 2 family. MatK subfamily.

The protein localises to the plastid. It is found in the chloroplast. Its function is as follows. Usually encoded in the trnK tRNA gene intron. Probably assists in splicing its own and other chloroplast group II introns. The chain is Maturase K from Pinus cembra (Swiss stone pine).